The chain runs to 249 residues: DNA repair protein RecO (249 aa).

This sequence belongs to the RecO family.

Its function is as follows. Involved in DNA repair and RecF pathway recombination. This Solidesulfovibrio magneticus (strain ATCC 700980 / DSM 13731 / RS-1) (Desulfovibrio magneticus) protein is DNA repair protein RecO.